We begin with the raw amino-acid sequence, 264 residues long: Thymidylate synthase (264 aa).

Residue arginine 21 participates in dUMP binding. Histidine 51 serves as a coordination point for (6R)-5,10-methylene-5,6,7,8-tetrahydrofolate. 126–127 (RR) contacts dUMP. The active-site Nucleophile is cysteine 146. DUMP-binding positions include 166–169 (RSAD), asparagine 177, and 207–209 (HLY). Position 169 (aspartate 169) interacts with (6R)-5,10-methylene-5,6,7,8-tetrahydrofolate. Position 263 (alanine 263) interacts with (6R)-5,10-methylene-5,6,7,8-tetrahydrofolate.

It belongs to the thymidylate synthase family. Bacterial-type ThyA subfamily. Homodimer.

The protein resides in the cytoplasm. It catalyses the reaction dUMP + (6R)-5,10-methylene-5,6,7,8-tetrahydrofolate = 7,8-dihydrofolate + dTMP. It functions in the pathway pyrimidine metabolism; dTTP biosynthesis. Functionally, catalyzes the reductive methylation of 2'-deoxyuridine-5'-monophosphate (dUMP) to 2'-deoxythymidine-5'-monophosphate (dTMP) while utilizing 5,10-methylenetetrahydrofolate (mTHF) as the methyl donor and reductant in the reaction, yielding dihydrofolate (DHF) as a by-product. This enzymatic reaction provides an intracellular de novo source of dTMP, an essential precursor for DNA biosynthesis. The chain is Thymidylate synthase from Hahella chejuensis (strain KCTC 2396).